A 118-amino-acid chain; its full sequence is Large ribosomal subunit protein bL20 (118 aa).

It belongs to the bacterial ribosomal protein bL20 family.

Binds directly to 23S ribosomal RNA and is necessary for the in vitro assembly process of the 50S ribosomal subunit. It is not involved in the protein synthesizing functions of that subunit. In Protochlamydia amoebophila (strain UWE25), this protein is Large ribosomal subunit protein bL20.